The sequence spans 295 residues: Bifunctional protein FolD (295 aa).

NADP(+) is bound by residues 165–167 (GRS), S190, and I231.

This sequence belongs to the tetrahydrofolate dehydrogenase/cyclohydrolase family. As to quaternary structure, homodimer.

It catalyses the reaction (6R)-5,10-methylene-5,6,7,8-tetrahydrofolate + NADP(+) = (6R)-5,10-methenyltetrahydrofolate + NADPH. It carries out the reaction (6R)-5,10-methenyltetrahydrofolate + H2O = (6R)-10-formyltetrahydrofolate + H(+). Its pathway is one-carbon metabolism; tetrahydrofolate interconversion. In terms of biological role, catalyzes the oxidation of 5,10-methylenetetrahydrofolate to 5,10-methenyltetrahydrofolate and then the hydrolysis of 5,10-methenyltetrahydrofolate to 10-formyltetrahydrofolate. This Nitrosomonas eutropha (strain DSM 101675 / C91 / Nm57) protein is Bifunctional protein FolD.